Consider the following 460-residue polypeptide: Omega-3 fatty acid desaturase, chloroplastic (460 aa).

The Histidine box-1 motif lies at 177-181 (HDCGH). The Histidine box-2 motif lies at 213–217 (HRTHH). A Histidine box-3 motif is present at residues 380 to 384 (HVIHH).

The protein belongs to the fatty acid desaturase type 1 family.

The protein localises to the plastid. It localises to the chloroplast membrane. Its pathway is lipid metabolism; polyunsaturated fatty acid biosynthesis. Its function is as follows. Chloroplast omega-3 fatty acid desaturase introduces the third double bond in the biosynthesis of 16:3 and 18:3 fatty acids, important constituents of plant membranes. It is thought to use ferredoxin as an electron donor and to act on fatty acids esterified to galactolipids, sulfolipids and phosphatidylglycerol. In Ricinus communis (Castor bean), this protein is Omega-3 fatty acid desaturase, chloroplastic (FAD7A-1).